The chain runs to 207 residues: Cilia- and flagella-associated protein 418 (207 aa).

Positions 1–75 (MAEDLDELLD…LINEILEEPN (75 aa)) are required for interaction with FAM161A. The interval 26 to 52 (MVEQPKGCGGGTHSSDRNQAKAKETLR) is disordered. Over residues 39–52 (SSDRNQAKAKETLR) the composition is skewed to basic and acidic residues.

In terms of assembly, interacts (via N-terminus) with FAM161A (via central region); the interaction is direct. As to expression, widely expressed, with highest levels in heart and brain. Also expressed in the retina (at protein level).

It is found in the cytoplasm. Its subcellular location is the photoreceptor inner segment. May be involved in photoreceptor outer segment disk morphogenesis. The polypeptide is Cilia- and flagella-associated protein 418 (Homo sapiens (Human)).